A 119-amino-acid chain; its full sequence is MPAVFMLASSSALQCGRGVPRFPRTEVGAGHSVNEETKAEKVGNQTSVIPATSRQAALGTSWTQRRTQPLQERSHWHPRGNNASGMGGHRMFPGPLRGPAAQVLENECGSLGRAAEGRS.

The signal sequence occupies residues methionine 1 to glycine 18. Residues proline 23–alanine 100 are disordered. The segment covering glycine 43–glutamine 71 has biased composition (polar residues). Asparagine 44 carries an N-linked (GlcNAc...) asparagine glycan.

The protein localises to the secreted. This is an uncharacterized protein from Homo sapiens (Human).